We begin with the raw amino-acid sequence, 331 residues long: Undecaprenyl-phosphate 4-deoxy-4-formamido-L-arabinose transferase (331 aa).

Transmembrane regions (helical) follow at residues 236–256 and 270–290; these read LSIV…FLIL and VFPL…GLGL.

This sequence belongs to the glycosyltransferase 2 family.

It localises to the cell inner membrane. It carries out the reaction UDP-4-deoxy-4-formamido-beta-L-arabinose + di-trans,octa-cis-undecaprenyl phosphate = 4-deoxy-4-formamido-alpha-L-arabinopyranosyl di-trans,octa-cis-undecaprenyl phosphate + UDP. The protein operates within glycolipid biosynthesis; 4-amino-4-deoxy-alpha-L-arabinose undecaprenyl phosphate biosynthesis; 4-amino-4-deoxy-alpha-L-arabinose undecaprenyl phosphate from UDP-4-deoxy-4-formamido-beta-L-arabinose and undecaprenyl phosphate: step 1/2. Its pathway is bacterial outer membrane biogenesis; lipopolysaccharide biosynthesis. Functionally, catalyzes the transfer of 4-deoxy-4-formamido-L-arabinose from UDP to undecaprenyl phosphate. The modified arabinose is attached to lipid A and is required for resistance to polymyxin and cationic antimicrobial peptides. This is Undecaprenyl-phosphate 4-deoxy-4-formamido-L-arabinose transferase from Shewanella sediminis (strain HAW-EB3).